Here is an 806-residue protein sequence, read N- to C-terminus: Leucine--tRNA ligase (806 aa).

Positions 40–51 (PYPSGAGLHVGH) match the 'HIGH' region motif. The short motif at 576–580 (KMSKS) is the 'KMSKS' region element. Lysine 579 provides a ligand contact to ATP.

The protein belongs to the class-I aminoacyl-tRNA synthetase family.

It localises to the cytoplasm. The enzyme catalyses tRNA(Leu) + L-leucine + ATP = L-leucyl-tRNA(Leu) + AMP + diphosphate. This chain is Leucine--tRNA ligase, found in Halalkalibacterium halodurans (strain ATCC BAA-125 / DSM 18197 / FERM 7344 / JCM 9153 / C-125) (Bacillus halodurans).